The primary structure comprises 293 residues: Diaminopimelate epimerase (293 aa).

Substrate is bound by residues N17, Q47, and N67. Residue C76 is the Proton donor of the active site. Residues 77–78 (GN), N164, N197, and 215–216 (ER) each bind substrate. C224 serves as the catalytic Proton acceptor. Substrate is bound at residue 225-226 (GS).

It belongs to the diaminopimelate epimerase family. Homodimer.

It is found in the cytoplasm. It catalyses the reaction (2S,6S)-2,6-diaminopimelate = meso-2,6-diaminopimelate. It participates in amino-acid biosynthesis; L-lysine biosynthesis via DAP pathway; DL-2,6-diaminopimelate from LL-2,6-diaminopimelate: step 1/1. Functionally, catalyzes the stereoinversion of LL-2,6-diaminopimelate (L,L-DAP) to meso-diaminopimelate (meso-DAP), a precursor of L-lysine and an essential component of the bacterial peptidoglycan. This Rhodopseudomonas palustris (strain BisB5) protein is Diaminopimelate epimerase.